A 1346-amino-acid chain; its full sequence is Toll-like receptor Tollo (1346 aa).

The signal sequence occupies residues 1 to 21 (MLATTHMLYVLIATCVIPIFG). Over 22–1021 (AALSKTVLYQ…NQPPKLDYIP (1000 aa)) the chain is Extracellular. N-linked (GlcNAc...) asparagine glycosylation is found at Asn-63, Asn-112, and Asn-126. LRR repeat units lie at residues 97–120 (LVELRDLTIEYCKLGNLTDGSFRG), 124–146 (LRNLTIRTHNGDWSTMSLEMASN), 151–174 (FRQLERLDLSLNNIWLIPDGMVCP), 176–198 (KSLQHLNASYNKIQDISNFYFSA), 209–232 (GSTLQSLDLSANKMVSLPTAMLSA), 234–256 (GRLTHLNMAKNSMSFLADRAFEG), 257–280 (LLSLRVVDLSANRLTSLPPELFAE), 282–304 (KQLQEIYLRNNSINVLAPGIFGE), 306–330 (AELLVLDLASNELNSQWINAATFVG), 331–354 (LKRLMMLDLSANKISRLEAHIFRP), 355–378 (LASLQILKLEDNYIDQLPGGIFAD), 380–402 (TNLHTLILSRNRISVIEQRTLQG), 404–426 (KNLLVLSLDFNRISRMDQRSLVN), 427–450 (CSQLQDLHLNDNKLQAVPEALAHV), 452–473 (LLKTLDVGENMISQIENTSITQ), 474–497 (LESLYGLRMTENSLTHIRRGVFDR), 498–521 (MSSLQILNLSQNKLKSIEAGSLQR), 523–544 (SQLQAIRLDGNQLKSIAGLFTE), 546–568 (PNLVWLNISGNRLEKFDYSHIPI), 570–591 (LQWLDVRANRITQLGNYFEIES), 593–614 (LSLSTFDASYNLLTEITASSIP), 615–637 (NSVEVLYLNDNQISKIQPYTFFK), and 638–661 (KPNLTRVDLVRNRLTTLEPNALRL). Asn-182 carries an N-linked (GlcNAc...) asparagine glycan. A glycan (N-linked (GlcNAc...) asparagine) is linked at Asn-291. N-linked (GlcNAc...) asparagine glycosylation occurs at Asn-426. N-linked (GlcNAc...) asparagine glycosylation occurs at Asn-468. Residue Asn-505 is glycosylated (N-linked (GlcNAc...) asparagine). Asn-552 carries an N-linked (GlcNAc...) asparagine glycan. Asn-640 carries N-linked (GlcNAc...) asparagine glycosylation. Disulfide bonds link Cys-682/Cys-710, Cys-684/Cys-733, Cys-757/Cys-763, and Cys-761/Cys-776. LRR repeat units follow at residues 790-813 (PMDSTQLYLDGNNFRELQSHAFIG), 814-837 (RKRLKVLHLNHSRIEVLHNRTFYG), 838-861 (LLELEVLQLQSNQLKALNGNEFQG), 863-885 (DNLQELYLQHNAIATIDTLTFTH), 887-909 (YHLKILRLDHNAITSFAVWNFLP), and 912-938 (LNELRLASNPWTCSCEFIDKLRDYINR). N-linked (GlcNAc...) asparagine glycosylation is found at Asn-823 and Asn-832. Cys-924 and Cys-950 are joined by a disulfide. N-linked (GlcNAc...) asparagine glycosylation is found at Asn-956 and Asn-1000. A helical transmembrane segment spans residues 1022–1042 (ILVAILTAFIFVMICISLVFI). At 1043 to 1346 (FRQEMRVWCH…PTPASRNLHM (304 aa)) the chain is on the cytoplasmic side. A TIR domain is found at 1074-1209 (KLFDAFVSYS…LFWQKLRFAL (136 aa)). The disordered stretch occupies residues 1235–1346 (HHHHHVHQQA…PTPASRNLHM (112 aa)). Over residues 1267 to 1300 (PGSFRRQPSLHQQQQQQQQIRGNNNTTQQQQQQQ) the composition is skewed to low complexity.

It belongs to the Toll-like receptor family. In terms of assembly, may interact (via the extracellular domain) with 18w (via the extracellular domain).

Its subcellular location is the cell membrane. The protein localises to the apical cell membrane. Its function is as follows. Toll-related receptor. Probably specific to larval innate immunity. Involved in the tracheal immune response of larvae to Gram-negative and perhaps Gram-positive bacteria; upon infection it negatively regulates the immune deficiency (Imd) signaling cascade specifically in the respiratory epithelium to prevent the overexpression of antimicrobial peptides (AMP). Involved in the NF-kappa-B-dependent apoptosis of unfit cells during cell competition. Involved in neuron-specific glycosylation. Positively controls the neuromuscular junction (NMJ) growth in presynaptic motorneurons, probably via the JNK pathway. During development of the peripheral nervous system, may function in the NF-kappa-B (rel) regulatory cascade to repress expression of the neuron-specific genes sc and ase in non-neuronal cells. Promotes heterophilic cell adhesion with 18w in vitro. May have a minor role in leg development. May be involved in determining the proximal cell fate in the wing, possibly by negatively regulating the Dpp signaling pathway. May also be involved in the Dpp signaling pathway in the eye. Possibly functions with 18w and Toll-6 during convergent extension, to help direct proper planar cell polarity, cell intercalation and axis elongation. This is Toll-like receptor Tollo from Drosophila melanogaster (Fruit fly).